Reading from the N-terminus, the 247-residue chain is MAGEADGPFKRVLVPVLLPEKCYDQLFVHWDFLHVPCLKILLSKGLGLGIVAGSLLVKLPQIFKILGAKSAEGLSLQSVMLELVALTGTVIYSITNNFPFSSWGEALFLTLQTITICLLVLHYRGDTVKGVALLACYATLLLALLSPLTPLAVVTMLQASNVPAVVVGKLLQAATNYHNGHTGQLSAITVFMLFGGSLARIFTSVQETGDPLMAGVFVVSSLCNGLIAAQVLFYWNAKPPHKHKKEQ.

A2 carries the post-translational modification N-acetylalanine. The 67-residue stretch at 39–105 (KILLSKGLGL…NNFPFSSWGE (67 aa)) folds into the PQ-loop 1 domain. Helical transmembrane passes span 46-66 (LGLGIVAGSLLVKLPQIFKIL), 74-94 (LSLQSVMLELVALTGTVIYSI), 103-123 (WGEALFLTLQTITICLLVLHY), 128-145 (VKGVALLACYATLLLALL), 151-171 (LAVVTMLQASNVPAVVVGKLL), 185-205 (LSAITVFMLFGGSLARIFTSV), and 213-233 (MAGVFVVSSLCNGLIAAQVLF). The 58-residue stretch at 159–216 (ASNVPAVVVGKLLQAATNYHNGHTGQLSAITVFMLFGGSLARIFTSVQETGDPLMAGV) folds into the PQ-loop 2 domain.

It belongs to the MPDU1 (TC 2.A.43.3) family.

It is found in the membrane. Its function is as follows. Required for normal utilization of mannose-dolichol phosphate (Dol-P-Man) in the synthesis of N-linked and O-linked oligosaccharides and GPI anchors. In Cricetulus griseus (Chinese hamster), this protein is Mannose-P-dolichol utilization defect 1 protein (MPDU1).